A 331-amino-acid polypeptide reads, in one-letter code: Glycerol-3-phosphate dehydrogenase [NAD(P)+] (331 aa).

The NADPH site is built by tryptophan 11 and lysine 101. The sn-glycerol 3-phosphate site is built by lysine 101, glycine 132, and serine 134. Alanine 136 provides a ligand contact to NADPH. Lysine 188, aspartate 241, serine 251, arginine 252, and asparagine 253 together coordinate sn-glycerol 3-phosphate. The Proton acceptor role is filled by lysine 188. Residue arginine 252 coordinates NADPH. Glutamate 278 is a binding site for NADPH.

This sequence belongs to the NAD-dependent glycerol-3-phosphate dehydrogenase family.

Its subcellular location is the cytoplasm. The catalysed reaction is sn-glycerol 3-phosphate + NAD(+) = dihydroxyacetone phosphate + NADH + H(+). The enzyme catalyses sn-glycerol 3-phosphate + NADP(+) = dihydroxyacetone phosphate + NADPH + H(+). The protein operates within membrane lipid metabolism; glycerophospholipid metabolism. Its function is as follows. Catalyzes the reduction of the glycolytic intermediate dihydroxyacetone phosphate (DHAP) to sn-glycerol 3-phosphate (G3P), the key precursor for phospholipid synthesis. This Phytoplasma mali (strain AT) protein is Glycerol-3-phosphate dehydrogenase [NAD(P)+].